A 400-amino-acid chain; its full sequence is Renin (400 aa).

The first 17 residues, Met-1–Ser-17, serve as a signal peptide directing secretion. A propeptide spans Leu-18–Lys-59 (activation peptide). Asn-65 is a glycosylation site (N-linked (GlcNAc...) asparagine). Residues Tyr-80–Ala-397 form the Peptidase A1 domain. The active site involves Asp-98. Cys-111 and Cys-118 are disulfide-bonded. Asn-135 carries N-linked (GlcNAc...) asparagine glycosylation. A disulfide bond links Cys-277 and Cys-281. Asp-286 is an active-site residue. The cysteines at positions 320 and 356 are disulfide-linked. A glycan (N-linked (GlcNAc...) asparagine) is linked at Asn-353.

It belongs to the peptidase A1 family. Interacts with ATP6AP2. In terms of tissue distribution, kidney.

It localises to the secreted. The protein localises to the membrane. It catalyses the reaction Cleavage of Leu-|-Xaa bond in angiotensinogen to generate angiotensin I.. Its activity is regulated as follows. Interaction with ATP6AP2 results in a 5-fold increased efficiency in angiotensinogen processing. In terms of biological role, renin is a highly specific endopeptidase, whose only known function is to generate angiotensin I from angiotensinogen in the plasma, initiating a cascade of reactions that produce an elevation of blood pressure and increased sodium retention by the kidney. In Ovis aries (Sheep), this protein is Renin (REN).